We begin with the raw amino-acid sequence, 229 residues long: Echinolectin 1 (229 aa).

Residue asparagine 94 is glycosylated (N-linked (GlcNAc...) asparagine).

The protein resides in the secreted. In Echinometra lucunter (Rock-boring urchin), this protein is Echinolectin 1.